We begin with the raw amino-acid sequence, 293 residues long: Elongation factor Ts (293 aa).

Positions 80–83 are involved in Mg(2+) ion dislocation from EF-Tu; sequence TDFV.

This sequence belongs to the EF-Ts family.

It is found in the cytoplasm. Functionally, associates with the EF-Tu.GDP complex and induces the exchange of GDP to GTP. It remains bound to the aminoacyl-tRNA.EF-Tu.GTP complex up to the GTP hydrolysis stage on the ribosome. This chain is Elongation factor Ts, found in Burkholderia lata (strain ATCC 17760 / DSM 23089 / LMG 22485 / NCIMB 9086 / R18194 / 383).